The following is a 669-amino-acid chain: MSKEIAKKRIEELRDLLNTFNYQYHVLDNPSVSDAEYDRNMQELIKLEAENPEFMSEDSPSVRVGGTVLDIFEKVTHKSPMLSLGNAFNEGDLRDFDRRVRQGIDDVNVRYICELKIDGLAVSLHYEKGRFIQGATRGDGVTGEDITQNLKTIKAIPLRLNEEVTLEARGEAYMPKRSFVKLNEEKEQNGEDVFANPRNAAAGSIRQLDPKIAAKRNLSMFVYGLANVEEKTILSHSESLDFLGELGFKTNPNRRTCETIEEVIAYVEEWQEKRPHLDYEIDGIVIKVDDVALQESLGTTAKSPRWAIAYKFPAEEVVTRLTGIELSVGRTGVVTPTAELEPVRVAGTIVRRASLHNEDLIREKDIRIGDYVVVKKAGDIIPEVVNVIFDKRTGEEEEYHMPTHCPACESELVRLEEEVALRCINPTCPAQIREGLIHFVSRNAMNIDGLGERVITQLFEADYIRTFADLYSLTKEQLLQLERFGEKSATNLVKAIENSKENSLERLLFGLGIRHVGAKAARTFAEHFETMDALVKATEEELKAINEIGEKMAQSVVTYFDNEDVLELLQQFKEYGVNMTYKGMKIADLQNVESYFAGKTVVLTGKLEVMGRSEAKKKIEALGGKVTGSVSKSTDLVVAGEAAGSKLAQAEKHNVEVWNEERFLQELNK.

NAD(+) is bound by residues 34 to 38 (DAEYD), 83 to 84 (SL), and Glu-114. The active-site N6-AMP-lysine intermediate is the Lys-116. NAD(+)-binding residues include Arg-137, Glu-171, Lys-287, and Lys-311. Zn(2+) is bound by residues Cys-405, Cys-408, Cys-423, and Cys-428. One can recognise a BRCT domain in the interval 591–669 (NVESYFAGKT…EERFLQELNK (79 aa)).

Belongs to the NAD-dependent DNA ligase family. LigA subfamily. The cofactor is Mg(2+). Requires Mn(2+) as cofactor.

It carries out the reaction NAD(+) + (deoxyribonucleotide)n-3'-hydroxyl + 5'-phospho-(deoxyribonucleotide)m = (deoxyribonucleotide)n+m + AMP + beta-nicotinamide D-nucleotide.. In terms of biological role, DNA ligase that catalyzes the formation of phosphodiester linkages between 5'-phosphoryl and 3'-hydroxyl groups in double-stranded DNA using NAD as a coenzyme and as the energy source for the reaction. It is essential for DNA replication and repair of damaged DNA. The polypeptide is DNA ligase (Bacillus cereus (strain ATCC 10987 / NRS 248)).